Consider the following 327-residue polypeptide: Putative HTH-type transcriptional regulatory protein MM_0444 (327 aa).

One can recognise an HTH cro/C1-type domain in the interval leucine 132–leucine 190. Residues leucine 143–glutamate 162 constitute a DNA-binding region (H-T-H motif). Residues serine 195 to glycine 214 are disordered. Residues lysine 201–glycine 211 show a composition bias toward basic and acidic residues.

The polypeptide is Putative HTH-type transcriptional regulatory protein MM_0444 (Methanosarcina mazei (strain ATCC BAA-159 / DSM 3647 / Goe1 / Go1 / JCM 11833 / OCM 88) (Methanosarcina frisia)).